The sequence spans 261 residues: Putative cysteine protease YopT-like y4zC (261 aa).

The segment covering 1–15 (MHSPISGSFTSSTQV) has biased composition (polar residues). Disordered stretches follow at residues 1–48 (MHSP…CPDK) and 54–73 (SKPQASDPNNPSTSSPARPS). The segment covering 61-73 (PNNPSTSSPARPS) has biased composition (low complexity). Active-site residues include Cys93, His205, and Asp220.

This sequence belongs to the peptidase C58 family.

Functionally, potential cysteine protease, which may play a central role after invasion of host cell. The chain is Putative cysteine protease YopT-like y4zC from Sinorhizobium fredii (strain NBRC 101917 / NGR234).